The following is a 503-amino-acid chain: ATP synthase subunit alpha, chloroplastic (503 aa).

170-177 is an ATP binding site; the sequence is GDRQTGKT.

It belongs to the ATPase alpha/beta chains family. F-type ATPases have 2 components, CF(1) - the catalytic core - and CF(0) - the membrane proton channel. CF(1) has five subunits: alpha(3), beta(3), gamma(1), delta(1), epsilon(1). CF(0) has four main subunits: a, b, b' and c.

The protein resides in the plastid. It is found in the chloroplast thylakoid membrane. It carries out the reaction ATP + H2O + 4 H(+)(in) = ADP + phosphate + 5 H(+)(out). In terms of biological role, produces ATP from ADP in the presence of a proton gradient across the membrane. The alpha chain is a regulatory subunit. The protein is ATP synthase subunit alpha, chloroplastic of Thalassiosira pseudonana (Marine diatom).